Here is a 546-residue protein sequence, read N- to C-terminus: Putative serine hydroxymethyltransferase, mitochondrial (546 aa).

A mitochondrion-targeting transit peptide spans 1 to 64 (MSSFQSTAAV…RFSSSSIAND (64 aa)). Lys-305 is modified (N6-(pyridoxal phosphate)lysine).

Belongs to the SHMT family. In terms of assembly, homotetramer. Pyridoxal 5'-phosphate serves as cofactor.

The protein resides in the mitochondrion. The enzyme catalyses (6R)-5,10-methylene-5,6,7,8-tetrahydrofolate + glycine + H2O = (6S)-5,6,7,8-tetrahydrofolate + L-serine. It participates in one-carbon metabolism; tetrahydrofolate interconversion. Functionally, interconversion of serine and glycine. The sequence is that of Putative serine hydroxymethyltransferase, mitochondrial (cbs-2) from Neurospora crassa (strain ATCC 24698 / 74-OR23-1A / CBS 708.71 / DSM 1257 / FGSC 987).